A 411-amino-acid polypeptide reads, in one-letter code: Histidine--tRNA ligase (411 aa).

Belongs to the class-II aminoacyl-tRNA synthetase family. In terms of assembly, homodimer.

The protein localises to the cytoplasm. It catalyses the reaction tRNA(His) + L-histidine + ATP = L-histidyl-tRNA(His) + AMP + diphosphate + H(+). In Dictyoglomus turgidum (strain DSM 6724 / Z-1310), this protein is Histidine--tRNA ligase.